The chain runs to 399 residues: Chaperone protein DnaJ 1 (399 aa).

The J domain occupies 10–75; the sequence is DYYKVLGVPK…KKRKEYDEAR (66 aa). Residues 166-244 form a CR-type zinc finger; the sequence is GATVPLRMSS…CKGSGRAKSS (79 aa). Residues cysteine 179, cysteine 182, cysteine 195, cysteine 198, cysteine 218, cysteine 221, cysteine 232, and cysteine 235 each coordinate Zn(2+). 4 CXXCXGXG motif repeats span residues 179-186, 195-202, 218-225, and 232-239; these read CKACSGTG, CPTCVGTG, CPDCKGRG, and CEVCKGSG.

It belongs to the DnaJ family. As to quaternary structure, homodimer. Zn(2+) serves as cofactor.

It is found in the cytoplasm. Functionally, participates actively in the response to hyperosmotic and heat shock by preventing the aggregation of stress-denatured proteins and by disaggregating proteins, also in an autonomous, DnaK-independent fashion. Unfolded proteins bind initially to DnaJ; upon interaction with the DnaJ-bound protein, DnaK hydrolyzes its bound ATP, resulting in the formation of a stable complex. GrpE releases ADP from DnaK; ATP binding to DnaK triggers the release of the substrate protein, thus completing the reaction cycle. Several rounds of ATP-dependent interactions between DnaJ, DnaK and GrpE are required for fully efficient folding. Also involved, together with DnaK and GrpE, in the DNA replication of plasmids through activation of initiation proteins. The sequence is that of Chaperone protein DnaJ 1 from Streptomyces coelicolor (strain ATCC BAA-471 / A3(2) / M145).